Here is a 516-residue protein sequence, read N- to C-terminus: RNA-binding region-containing protein 3 (516 aa).

Disordered regions lie at residues 1–27, 106–130, 210–254, and 264–283; these read MAAP…RGDR, VHSP…DDKE, EDYM…DEDR, and ANLQ…RKKR. Ser21 is modified (phosphoserine). The 76-residue stretch at 27 to 102 folds into the RRM 1 domain; that stretch reads RTLLVRHLPA…HTLVVEFAKE (76 aa). The residue at position 108 (Ser108) is a Phosphoserine. Over residues 115–130 the composition is skewed to basic and acidic residues; that stretch reads TEKKKRSDDPVEDDKE. The segment covering 217-230 has biased composition (pro residues); that stretch reads APLPPTSPQPPEEP. The span at 269 to 283 shows a compositional bias: basic residues; the sequence is KRPKPIKQRHVRKKR. Positions 419-502 constitute an RRM 2 domain; the sequence is CRIYVKNLAK…KPMVVQFARS (84 aa).

As to quaternary structure, component of the U11/U12 snRNPs that are part of the U12-type spliceosome. Found in a complex with m(7)G-capped U12 snRNA. Interacts with PDCD7.

Its subcellular location is the nucleus. Its function is as follows. Participates in pre-mRNA U12-dependent splicing, performed by the minor spliceosome which removes U12-type introns. U12-type introns comprises less than 1% of all non-coding sequences. Binds to the 3'-stem-loop of m(7)G-capped U12 snRNA. The sequence is that of RNA-binding region-containing protein 3 (RNPC3) from Bos taurus (Bovine).